The following is a 551-amino-acid chain: Probable 4-coumarate--CoA ligase 1 (551 aa).

ATP-binding residues include serine 205, serine 206, glycine 207, threonine 208, threonine 209, and lysine 213. Residue tyrosine 253 participates in (E)-4-coumaroyl-AMP binding. Position 274 (lysine 274) interacts with CoA. Residues 276-346 (EPVRFLELIQ…RFKGRLVIKQ (71 aa)) form an SBD1 region. 4 residues coordinate (E)-4-coumaroyl-AMP: alanine 323, glutamine 346, glycine 347, and threonine 351. 5 residues coordinate ATP: glutamine 346, glycine 347, threonine 351, aspartate 430, and arginine 445. An SBD2 region spans residues 347–409 (GYGATELSPA…IKGPNVMLGY (63 aa)). (E)-4-coumaroyl-AMP is bound by residues lysine 447 and lysine 451. Positions 453 and 454 each coordinate CoA. Lysine 537 contributes to the ATP binding site.

The protein belongs to the ATP-dependent AMP-binding enzyme family. Requires Mg(2+) as cofactor.

It catalyses the reaction (E)-4-coumarate + ATP + CoA = (E)-4-coumaroyl-CoA + AMP + diphosphate. The catalysed reaction is (E)-4-coumarate + ATP + H(+) = (E)-4-coumaroyl-AMP + diphosphate. It carries out the reaction (E)-4-coumaroyl-AMP + CoA = (E)-4-coumaroyl-CoA + AMP + H(+). The protein operates within phytoalexin biosynthesis; 3,4',5-trihydroxystilbene biosynthesis; 3,4',5-trihydroxystilbene from trans-4-coumarate: step 1/2. In terms of biological role, carboxylate--CoA ligase that may use 4-coumarate as substrate. Follows a two-step reaction mechanism, wherein the carboxylate substrate first undergoes adenylation by ATP, followed by a thioesterification in the presence of CoA to yield the final CoA thioester. This is Probable 4-coumarate--CoA ligase 1 (4cl1) from Dictyostelium discoideum (Social amoeba).